Consider the following 77-residue polypeptide: Major outer membrane lipoprotein Lpp (77 aa).

The first 19 residues, 1 to 19 (MNRTKLVLGAVILGSHSAG), serve as a signal peptide directing secretion. A lipid anchor (N-palmitoyl cysteine) is attached at Cys20. Cys20 carries the S-diacylglycerol cysteine lipid modification. 2 repeats span residues 23-33 (NAKIDQLSSDV) and 37-47 (NAKVDQLSNDV). The stretch at 26–74 (IDQLSSDVQTLNAKVDQLSNDVNAMRSDVQAAKDDAARANQRLDNQAHA) forms a coiled coil. Residues 56–77 (AAKDDAARANQRLDNQAHAYKK) are disordered. At Lys77 the chain carries N6-murein peptidoglycan lysine.

This sequence belongs to the Lpp family. Homotrimer.

The protein resides in the cell outer membrane. It localises to the secreted. It is found in the cell wall. Functionally, a highly abundant outer membrane lipoprotein that controls the distance between the inner and outer membranes. The only protein known to be covalently linked to the peptidoglycan network (PGN). Also non-covalently binds the PGN. The link between the cell outer membrane and PGN contributes to maintenance of the structural and functional integrity of the cell envelope, and maintains the correct distance between the PGN and the outer membrane. The sequence is that of Major outer membrane lipoprotein Lpp from Serratia marcescens.